The sequence spans 338 residues: RNA 3'-terminal phosphate cyclase (338 aa).

Residues Gln-103 and 283–287 (YLADQ) contribute to the ATP site. His-308 (tele-AMP-histidine intermediate) is an active-site residue.

This sequence belongs to the RNA 3'-terminal cyclase family. Type 1 subfamily.

The protein localises to the cytoplasm. The catalysed reaction is a 3'-end 3'-phospho-ribonucleotide-RNA + ATP = a 3'-end 2',3'-cyclophospho-ribonucleotide-RNA + AMP + diphosphate. Functionally, catalyzes the conversion of 3'-phosphate to a 2',3'-cyclic phosphodiester at the end of RNA. The mechanism of action of the enzyme occurs in 3 steps: (A) adenylation of the enzyme by ATP; (B) transfer of adenylate to an RNA-N3'P to produce RNA-N3'PP5'A; (C) and attack of the adjacent 2'-hydroxyl on the 3'-phosphorus in the diester linkage to produce the cyclic end product. The biological role of this enzyme is unknown but it is likely to function in some aspects of cellular RNA processing. This chain is RNA 3'-terminal phosphate cyclase, found in Escherichia coli O6:K15:H31 (strain 536 / UPEC).